A 552-amino-acid chain; its full sequence is Non-structural protein NS1 (552 aa).

It belongs to the orbivirus non-structural protein NS1 family.

The protein is Non-structural protein NS1 (Segment-5) of Antilocapra americana (Pronghorn).